The primary structure comprises 658 residues: Translation factor GUF1, mitochondrial (658 aa).

Positions 45–231 (ENYRNFSIVA…AVIDRIPPPT (187 aa)) constitute a tr-type G domain. GTP contacts are provided by residues 54–61 (AHIDHGKS), 123–127 (DTPGH), and 177–180 (NKID).

The protein belongs to the TRAFAC class translation factor GTPase superfamily. Classic translation factor GTPase family. LepA subfamily.

It localises to the mitochondrion inner membrane. It carries out the reaction GTP + H2O = GDP + phosphate + H(+). Its function is as follows. Promotes mitochondrial protein synthesis. May act as a fidelity factor of the translation reaction, by catalyzing a one-codon backward translocation of tRNAs on improperly translocated ribosomes. Binds to mitochondrial ribosomes in a GTP-dependent manner. In Vanderwaltozyma polyspora (strain ATCC 22028 / DSM 70294 / BCRC 21397 / CBS 2163 / NBRC 10782 / NRRL Y-8283 / UCD 57-17) (Kluyveromyces polysporus), this protein is Translation factor GUF1, mitochondrial.